Here is a 334-residue protein sequence, read N- to C-terminus: Holliday junction branch migration complex subunit RuvB (334 aa).

Residues 4–184 (ADRLISAAVI…FGIVQRLEFY (181 aa)) are large ATPase domain (RuvB-L). ATP-binding positions include I23, R24, G65, K68, T69, T70, 131 to 133 (EDY), R174, Y184, and R221. T69 lines the Mg(2+) pocket. The segment at 185–255 (QVADLEHIVS…VAMKALDMLN (71 aa)) is small ATPAse domain (RuvB-S). The segment at 258–334 (AEGFDFMDRK…YKHFGITREE (77 aa)) is head domain (RuvB-H). The DNA site is built by R294, R313, and R318.

It belongs to the RuvB family. As to quaternary structure, homohexamer. Forms an RuvA(8)-RuvB(12)-Holliday junction (HJ) complex. HJ DNA is sandwiched between 2 RuvA tetramers; dsDNA enters through RuvA and exits via RuvB. An RuvB hexamer assembles on each DNA strand where it exits the tetramer. Each RuvB hexamer is contacted by two RuvA subunits (via domain III) on 2 adjacent RuvB subunits; this complex drives branch migration. In the full resolvosome a probable DNA-RuvA(4)-RuvB(12)-RuvC(2) complex forms which resolves the HJ.

Its subcellular location is the cytoplasm. It catalyses the reaction ATP + H2O = ADP + phosphate + H(+). The RuvA-RuvB-RuvC complex processes Holliday junction (HJ) DNA during genetic recombination and DNA repair, while the RuvA-RuvB complex plays an important role in the rescue of blocked DNA replication forks via replication fork reversal (RFR). RuvA specifically binds to HJ cruciform DNA, conferring on it an open structure. The RuvB hexamer acts as an ATP-dependent pump, pulling dsDNA into and through the RuvAB complex. RuvB forms 2 homohexamers on either side of HJ DNA bound by 1 or 2 RuvA tetramers; 4 subunits per hexamer contact DNA at a time. Coordinated motions by a converter formed by DNA-disengaged RuvB subunits stimulates ATP hydrolysis and nucleotide exchange. Immobilization of the converter enables RuvB to convert the ATP-contained energy into a lever motion, pulling 2 nucleotides of DNA out of the RuvA tetramer per ATP hydrolyzed, thus driving DNA branch migration. The RuvB motors rotate together with the DNA substrate, which together with the progressing nucleotide cycle form the mechanistic basis for DNA recombination by continuous HJ branch migration. Branch migration allows RuvC to scan DNA until it finds its consensus sequence, where it cleaves and resolves cruciform DNA. The protein is Holliday junction branch migration complex subunit RuvB of Yersinia pseudotuberculosis serotype O:1b (strain IP 31758).